We begin with the raw amino-acid sequence, 491 residues long: Leucine aminopeptidase 1 (491 aa).

Positions 252 and 257 each coordinate Zn(2+). K264 is an active-site residue. Residues D275, D334, and E336 each contribute to the Zn(2+) site. R338 is a catalytic residue.

The protein belongs to the peptidase M17 family. Requires Zn(2+) as cofactor. In terms of tissue distribution, expressed in the buccal cavity, pharynx, anterior gut and rectum.

It carries out the reaction Release of an N-terminal amino acid, Xaa-|-Yaa-, in which Xaa is preferably Leu, but may be other amino acids including Pro although not Arg or Lys, and Yaa may be Pro. Amino acid amides and methyl esters are also readily hydrolyzed, but rates on arylamides are exceedingly low.. In terms of biological role, probably acts as a digestive enzyme. This Caenorhabditis elegans protein is Leucine aminopeptidase 1 (lap-1).